The primary structure comprises 240 residues: Citrate synthase-lysine N-methyltransferase CSKMT, mitochondrial (240 aa).

The N-terminal 21 residues, 1–21, are a transit peptide targeting the mitochondrion; sequence MAALRRMLHLPRLTMGTCRPF.

Belongs to the methyltransferase superfamily.

It localises to the mitochondrion. The enzyme catalyses L-lysyl-[citrate synthase] + S-adenosyl-L-methionine = N(6)-methyl-L-lysyl-[citrate synthase] + S-adenosyl-L-homocysteine + H(+). The catalysed reaction is N(6)-methyl-L-lysyl-[citrate synthase] + S-adenosyl-L-methionine = N(6),N(6)-dimethyl-L-lysyl-[citrate synthase] + S-adenosyl-L-homocysteine + H(+). It catalyses the reaction N(6),N(6)-dimethyl-L-lysyl-[citrate synthase] + S-adenosyl-L-methionine = N(6),N(6),N(6)-trimethyl-L-lysyl-[citrate synthase] + S-adenosyl-L-homocysteine + H(+). With respect to regulation, citrate synthase-lysine methyltransferase activity is inhibited by S-adenosylhomocysteine (AdoHcy) and oxaloacetate (OAA). Functionally, protein-lysine methyltransferase that selectively trimethylates citrate synthase (CS) in mitochondria. Seems to conduct trimethylation in a highly distributive manner rather than in a processive manner, and thus introduces a single methyl group per binding event. The sequence is that of Citrate synthase-lysine N-methyltransferase CSKMT, mitochondrial from Pongo abelii (Sumatran orangutan).